The primary structure comprises 392 residues: N-acyl-phosphatidylethanolamine-hydrolyzing phospholipase D (392 aa).

Position 1 is an N-acetylmethionine (M1). Residues 1 to 16 (MDENETNQLLMTSNQY) show a composition bias toward polar residues. Residues 1–39 (MDENETNQLLMTSNQYPKEAVRKRQNSRNSGGSDSSRFS) form a disordered region. The segment covering 27–36 (SRNSGGSDSS) has biased composition (low complexity). Zn(2+)-binding residues include H183 and H185. An an N-acyl-1,2-diacyl-sn-glycero-3-phosphoethanolamine-binding site is contributed by Y186. Residues D187, H188, and H251 each coordinate Zn(2+). The deoxycholate site is built by K254 and M258. D282 contacts Zn(2+). An an N-acyl-1,2-diacyl-sn-glycero-3-phosphoethanolamine-binding site is contributed by H319. H341 is a binding site for Zn(2+). A346 serves as a coordination point for deoxycholate.

The protein belongs to the NAPE-PLD family. Homodimer. Bile acids promote the assembly of inactive monomers into an active dimer and enable catalysis. Requires Zn(2+) as cofactor. Widely expressed. Highest expression in brain, kidney and testis (at protein level). Expressed in adipose tissue (at protein level).

It localises to the golgi apparatus membrane. The protein localises to the early endosome membrane. Its subcellular location is the nucleus envelope. The protein resides in the nucleus. It is found in the nucleoplasm. The catalysed reaction is an N-acyl-1,2-diacyl-sn-glycero-3-phosphoethanolamine + H2O = an N-acylethanolamine + a 1,2-diacyl-sn-glycero-3-phosphate + H(+). It catalyses the reaction N-butanoyl-1-hexadecanoyl-2-(9Z,12Z-octadecadienoyl)-sn-glycero-3-phosphoethanolamine + H2O = N-butanoyl ethanolamine + 1-hexadecanoyl-2-(9Z,12Z-octadecadienoyl)-sn-glycero-3-phosphate + H(+). It carries out the reaction N-hexanoyl-1-hexadecanoyl-2-(9Z,12Z-octadecadienoyl)-sn-glycero-3-phosphoethanolamine + H2O = N-hexanoyl ethanolamine + 1-hexadecanoyl-2-(9Z,12Z-octadecadienoyl)-sn-glycero-3-phosphate + H(+). The enzyme catalyses N-octanoyl-1-hexadecanoyl-2-(9Z,12Z-octadecadienoyl)-sn-glycero-3-phosphoethanolamine + H2O = N-octanoyl ethanolamine + 1-hexadecanoyl-2-(9Z,12Z-octadecadienoyl)-sn-glycero-3-phosphate + H(+). The catalysed reaction is N-decanoyl-1-hexadecanoyl-2-(9Z,12Z-octadecadienoyl)-sn-glycero-3-phosphoethanolamine + H2O = N-decanoyl ethanolamine + 1-hexadecanoyl-2-(9Z,12Z-octadecadienoyl)-sn-glycero-3-phosphate + H(+). It catalyses the reaction N-dodecanoyl-1,2-di-(9Z-octadecenoyl)-sn-glycero-3-phosphoethanolamine + H2O = N-dodecanoylethanolamine + 1,2-di-(9Z-octadecenoyl)-sn-glycero-3-phosphate + H(+). It carries out the reaction N-tetradecanoyl-1,2-di-(9Z-octadecenoyl)-sn-glycero-3-phosphoethanolamine + H2O = N-tetradecanoylethanolamine + 1,2-di-(9Z-octadecenoyl)-sn-glycero-3-phosphate + H(+). The enzyme catalyses N-hexadecanoyl-1,2-di-(9Z-octadecenoyl)-sn-glycero-3-phosphoethanolamine + H2O = N-hexadecanoylethanolamine + 1,2-di-(9Z-octadecenoyl)-sn-glycero-3-phosphate + H(+). The catalysed reaction is N,1-dihexadecanoyl-2-(9Z,12Z-octadecadienoyl)-sn-glycero-3-phosphoethanolamine + H2O = 1-hexadecanoyl-2-(9Z,12Z-octadecadienoyl)-sn-glycero-3-phosphate + N-hexadecanoylethanolamine + H(+). It catalyses the reaction N-octadecanoyl-1,2-di-(9Z-octadecenoyl)-sn-glycero-3-phosphoethanolamine + H2O = N-octadecanoyl ethanolamine + 1,2-di-(9Z-octadecenoyl)-sn-glycero-3-phosphate + H(+). It carries out the reaction N,1,2-tri-(9Z-octadecenoyl)-sn-glycero-3-phosphoethanolamine + H2O = N-(9Z-octadecenoyl) ethanolamine + 1,2-di-(9Z-octadecenoyl)-sn-glycero-3-phosphate + H(+). The enzyme catalyses N-(5Z,8Z,11Z,14Z-eicosatetraenoyl)-1,2-diacyl-sn-glycero-3-phosphoethanolamine + H2O = N-(5Z,8Z,11Z,14Z-eicosatetraenoyl)-ethanolamine + a 1,2-diacyl-sn-glycero-3-phosphate + H(+). The catalysed reaction is N-(5Z,8Z,11Z,14Z-eicosatetraenoyl)-1,2-di-(9Z-octadecenoyl)-sn-glycero-3-phosphoethanolamine + H2O = N-(5Z,8Z,11Z,14Z-eicosatetraenoyl)-ethanolamine + 1,2-di-(9Z-octadecenoyl)-sn-glycero-3-phosphate + H(+). It catalyses the reaction 1-O-(1Z-octadecenoyl)-2-(9Z-octadecenoyl)-sn-glycero-3-phospho-N-hexadecanoyl-ethanolamine + H2O = 1-O-(1Z-octadecenoyl)-2-(9Z-octadecenoyl)-sn-glycero-3-phosphate + N-hexadecanoylethanolamine + H(+). It carries out the reaction N,1-diacyl-sn-glycero-3-phosphoethanolamine + H2O = an N-acylethanolamine + a 1-acyl-sn-glycero-3-phosphate + H(+). The enzyme catalyses N,1-dihexadecanoyl-sn-glycero-3-phosphoethanolamine + H2O = N-hexadecanoylethanolamine + 1-hexadecanoyl-sn-glycero-3-phosphate + H(+). The catalysed reaction is N-(5Z,8Z,11Z,14Z-eicosatetraenoyl)-1-(9Z-octadecenoyl)-sn-glycero-3-phosphoethanolamine + H2O = N-(5Z,8Z,11Z,14Z-eicosatetraenoyl)-ethanolamine + 1-(9Z-octadecenoyl)-sn-glycero-3-phosphate + H(+). Its activity is regulated as follows. Activated by divalent cations. Activated by bile acids. In terms of biological role, D-type phospholipase that hydrolyzes N-acyl-phosphatidylethanolamines (NAPEs) to produce bioactive N-acylethanolamines/fatty acid ethanolamides (NAEs/FAEs) and phosphatidic acid. Cleaves the terminal phosphodiester bond of diacyl- and alkenylacyl-NAPEs, primarily playing a role in the generation of long-chain saturated and monounsaturated NAEs in the brain. May control NAPE homeostasis in dopaminergic neuron membranes and regulate neuron survival, partly through RAC1 activation. As a regulator of lipid metabolism in the adipose tissue, mediates the crosstalk between adipocytes, gut microbiota and immune cells to control body temperature and weight. In particular, regulates energy homeostasis by promoting cold-induced brown or beige adipocyte differentiation program to generate heat from fatty acids and glucose. Has limited D-type phospholipase activity toward N-acyl lyso-NAPEs. The chain is N-acyl-phosphatidylethanolamine-hydrolyzing phospholipase D (NAPEPLD) from Bos taurus (Bovine).